Reading from the N-terminus, the 467-residue chain is MALSRIYSSKLASANKNLLPVITTYVRNASDSTDLKAVLSEKIPKEQERVKNFRKQFGATKVGEVTVDMMYGGMRGIKGLVCETSVLDPDEGIRFRGLSIPECQKVLPKAPGGAEPLPEGLFWLLITGDVPTKAQVDALSREWANRAALPSHVVTMLNNMPTTLHPMSQLSCAVTALNHESKYAKAYSEGVHKSKYWEYVYEDSMDLIAKLPVVAATIYRNTYRDGKGIGAIDPKKDWSANFTKMLGYEDEQFTELMRLYLTIHSDHEGGNVSAHTVHLVGSALSDPYLSFAAGMNGLAGPLHGLANQEVLVWLQKLRKELGDNASEDKVKDFIWKTLKSGQVVPGYGHAVLRKTDPRYTCQREFALKHLPNDPLFQLVSNIYKVVPPILTELGKVKNPWPNVDAHSGVLLQYYGLKEMNYYTVLFGVSRALGVLASLVWDRALGLPIERPKSMSTDGLMKAVGASK.

Catalysis depends on residues H303, H349, and D404.

It belongs to the citrate synthase family. As to quaternary structure, homodimer.

It is found in the mitochondrion matrix. It carries out the reaction oxaloacetate + acetyl-CoA + H2O = citrate + CoA + H(+). The protein operates within carbohydrate metabolism; tricarboxylic acid cycle; isocitrate from oxaloacetate: step 1/2. The sequence is that of Probable citrate synthase 1, mitochondrial from Aedes aegypti (Yellowfever mosquito).